Consider the following 95-residue polypeptide: Heteroscorpine-1 (95 aa).

The N-terminal stretch at 1–19 (MNSKLTALIFLGLVAIASC) is a signal peptide. Residues 55-95 (EFQCVANIDTMGNCETHCQKTSGEKGFCHGTKCKCGKPLSY) enclose the BetaSPN-type CS-alpha/beta domain. 3 disulfide bridges follow: C58/C82, C68/C87, and C72/C89.

Belongs to the long chain scorpion toxin family. Class 3 subfamily. Contains 3 disulfide bonds. Expressed by the venom gland.

It is found in the secreted. Its function is as follows. Has antibacterial activity against B.subtilis, K.pneumoniae and P.aeruginosa. The chain is Heteroscorpine-1 from Heterometrus laoticus (Thai giant scorpion).